The primary structure comprises 379 residues: Chaperone protein DnaJ (379 aa).

The 66-residue stretch at 7 to 72 (CYYETLEVER…DKRAAYDRYG (66 aa)) folds into the J domain. The CR-type zinc-finger motif lies at 135–213 (GKTAQIEIPV…CTGSGRVTKE (79 aa)). Zn(2+) is bound by residues Cys148, Cys151, Cys165, Cys168, Cys187, Cys190, Cys201, and Cys204. CXXCXGXG motif repeat units lie at residues 148 to 155 (CEACSGTG), 165 to 172 (CSTCGGAG), 187 to 194 (CPSCQGRG), and 201 to 208 (CPSCTGSG).

This sequence belongs to the DnaJ family. As to quaternary structure, homodimer. Requires Zn(2+) as cofactor.

It localises to the cytoplasm. Participates actively in the response to hyperosmotic and heat shock by preventing the aggregation of stress-denatured proteins and by disaggregating proteins, also in an autonomous, DnaK-independent fashion. Unfolded proteins bind initially to DnaJ; upon interaction with the DnaJ-bound protein, DnaK hydrolyzes its bound ATP, resulting in the formation of a stable complex. GrpE releases ADP from DnaK; ATP binding to DnaK triggers the release of the substrate protein, thus completing the reaction cycle. Several rounds of ATP-dependent interactions between DnaJ, DnaK and GrpE are required for fully efficient folding. Also involved, together with DnaK and GrpE, in the DNA replication of plasmids through activation of initiation proteins. The sequence is that of Chaperone protein DnaJ from Rhodopseudomonas palustris (strain ATCC BAA-98 / CGA009).